A 146-amino-acid polypeptide reads, in one-letter code: D-aminoacyl-tRNA deacylase (146 aa).

A Gly-cisPro motif, important for rejection of L-amino acids motif is present at residues 138–139 (GP).

This sequence belongs to the DTD family. As to quaternary structure, homodimer.

The protein resides in the cytoplasm. It carries out the reaction glycyl-tRNA(Ala) + H2O = tRNA(Ala) + glycine + H(+). The catalysed reaction is a D-aminoacyl-tRNA + H2O = a tRNA + a D-alpha-amino acid + H(+). In terms of biological role, an aminoacyl-tRNA editing enzyme that deacylates mischarged D-aminoacyl-tRNAs. Also deacylates mischarged glycyl-tRNA(Ala), protecting cells against glycine mischarging by AlaRS. Acts via tRNA-based rather than protein-based catalysis; rejects L-amino acids rather than detecting D-amino acids in the active site. By recycling D-aminoacyl-tRNA to D-amino acids and free tRNA molecules, this enzyme counteracts the toxicity associated with the formation of D-aminoacyl-tRNA entities in vivo and helps enforce protein L-homochirality. This Xanthomonas oryzae pv. oryzae (strain MAFF 311018) protein is D-aminoacyl-tRNA deacylase.